The following is a 947-amino-acid chain: Nonribosomal peptide synthetase ucdA (947 aa).

Residues 25–413 (YSPHANAGYC…AGPVVFKEYF (389 aa)) are adenylation (A) domain. Positions 585–665 (APENEFERDL…DLGTALRKLQ (81 aa)) constitute a Carrier domain. An O-(pantetheine 4'-phosphoryl)serine modification is found at serine 623. The segment at 684–934 (PLWLVHPGVG…MLSPEHVFDF (251 aa)) is thioesterase (TE) domain.

Belongs to the NRP synthetase family.

It catalyses the reaction 2 3-(4-hydroxyphenyl)pyruvate + 2 ATP = atromentin + 2 AMP + 2 diphosphate + H(+). The protein operates within secondary metabolite biosynthesis. Nonribosomal peptide synthetase that mediates the biosynthesis of usterphenyllins and uscandidusins, p-terphenyl derivatives. Within the pathway, ucdA condenses two 4-hydroxyphenylpyruvate (HPPA) units to produce atromentin. UcdA first activates HPPA through its A domain to AMP-HPPA. The HPPA unit is then loaded to the T domain and eventually transferred to the TE domain. Another HPPA unit is then loaded onto the T domain. The TE domain then catalyzes the condensation of the two HPPA units and the release of atromentin via cyclization. The pathway begin with the biosynthesis of 4-hydroxyphenylpyruvate (HPPA) from L-tyrosine, possibly by the aminotransferase ucdG. The nonribosomal peptide synthetase ucdA then condenses two HPPA units to produce atromentin. The key step in this pathway is the reduction and dehydration of atromentin to form a terphenyl triol intermediate, performed by the NAD-dependent dehydrogenase ucdB. Further O-methylation by the methyltransferase ucdC forms terphenyllin carrying two methoxy moieties at C-9 and C-12, and subsequent dihydroxylation at C-3 of ring A and C-15 of ring C by the flavin-dependent oxygenase ucdD leads to 3,15-dihydroxyterphenyllin. Prenylation by ucdE at position C-5 of ring A forms usterphenyllin B, and is followed by a second prenylation at position C-14 of ring C to form usterphenyllin A. The following furan ring formation that leads to uscandidusins A and B was proven to be an unexpected spontaneous non-enzymatic reaction. The chain is Nonribosomal peptide synthetase ucdA from Aspergillus ustus.